The following is a 955-amino-acid chain: MSQNTPSLRELEHHSAFVERHIGPNDAEIAQMLGVIGHASLDAMTDAIVPAKIKSPAPLALPESITEVQALAKIRAIADKNTVLRSFIGQGYYGTHTPNVILRNILENPAWYTAYTPYQAEISQGRMEALINFQTLCADLTGMEIANASLLDEATAAAEAMTLAKRSAKSKSDTFFVHDAVHPQTLELLRTRAEPMGIVLRVGTPAEALEADSFGLLLQYPDTFGQVGDYKALVDAVHARGGLVAVATDLLALTLLAAPGEWGADIVVGNSQRFGVPFGFGGPHAAFMACRDAYKRSMPGRLIGVSIDAQGNPAYRLTLQTREQHIRREKATSNICTAQVLLAVMASMYAVYHGPEGLTRIARRTHRLASILAAALRKAGVQVGGDFFDTLHVTGVHAEEIHAKARAAGYNLRAIDSDSVGISLDETTTRADIVAVASVFGASLDVDALDASTADALPAGLLRQSEFLTHPVFNTHHSEHELLRYLRSLADKDLAMDRTMIPLGSCTMKLNATAEMIPVTWPEFSQIHPLVPADQALGYKELIDSLEAMLVECTGYDAVSLQPNSGAQGEYAGLLAIRAYHRSRGEDHRDICLIPDSAHGTNPASAQMCGMKVVVTKTDANGNVDVEDIRLNAEKYSDRLAAIMMTYPSTHGVFEEEVVEICEIIHKHGGQVYTDGANMNALVGVAKPGKWGSDVSHLNLHKTFCIPHGGGGPGVGPCAVKEHLAPFLPGKLGDHGPVGMVSAASFGSASILPISWMYIAMMGTEGLRKATQVAQLNANYIAKRLAPHFKTLYTGRNGLVAHECILDVRPLEKTSGIGAEDVAKRLIDFGFHAPTLSFPVAGTLMVEPTESESLHELDRFIDAMIQIREEITAIEDGRLDREDNPLKNAPHTATAVTASEWTHAYPRELAAFPLPSLKLQKYWPPVARVDNVYGDKNVMCACIPVDAYKDDEVEA.

Lys-702 carries the post-translational modification N6-(pyridoxal phosphate)lysine.

It belongs to the GcvP family. As to quaternary structure, the glycine cleavage system is composed of four proteins: P, T, L and H. Pyridoxal 5'-phosphate is required as a cofactor.

The catalysed reaction is N(6)-[(R)-lipoyl]-L-lysyl-[glycine-cleavage complex H protein] + glycine + H(+) = N(6)-[(R)-S(8)-aminomethyldihydrolipoyl]-L-lysyl-[glycine-cleavage complex H protein] + CO2. Its function is as follows. The glycine cleavage system catalyzes the degradation of glycine. The P protein binds the alpha-amino group of glycine through its pyridoxal phosphate cofactor; CO(2) is released and the remaining methylamine moiety is then transferred to the lipoamide cofactor of the H protein. The polypeptide is Glycine dehydrogenase (decarboxylating) (Stenotrophomonas maltophilia (strain R551-3)).